The following is a 39-amino-acid chain: Cytochrome b559 subunit beta (39 aa).

The chain crosses the membrane as a helical span at residues 14-30 (WLAVHGLAVPTVFFLGS). Residue histidine 18 coordinates heme.

Belongs to the PsbE/PsbF family. In terms of assembly, heterodimer of an alpha subunit and a beta subunit. PSII is composed of 1 copy each of membrane proteins PsbA, PsbB, PsbC, PsbD, PsbE, PsbF, PsbH, PsbI, PsbJ, PsbK, PsbL, PsbM, PsbT, PsbX, PsbY, PsbZ, Psb30/Ycf12, at least 3 peripheral proteins of the oxygen-evolving complex and a large number of cofactors. It forms dimeric complexes. The cofactor is heme b.

It is found in the plastid. The protein resides in the chloroplast thylakoid membrane. Functionally, this b-type cytochrome is tightly associated with the reaction center of photosystem II (PSII). PSII is a light-driven water:plastoquinone oxidoreductase that uses light energy to abstract electrons from H(2)O, generating O(2) and a proton gradient subsequently used for ATP formation. It consists of a core antenna complex that captures photons, and an electron transfer chain that converts photonic excitation into a charge separation. This Welwitschia mirabilis (Tree tumbo) protein is Cytochrome b559 subunit beta.